Here is a 722-residue protein sequence, read N- to C-terminus: MSKNFKRVGAVAVAAAMSLSIMATTSINAASSPANKVYQDRFESMYSKIKDPANGYFSEQGIPYHSIETLMVEAPDYGHVTTSEAMSYYMWLEAMHGRFSGDFTGFDKSWSVTEQYLIPTEKDQPNTSMSRYDANKPATYAPEFQDPSKYPSPLDTSQPVGRDPINSQLTSAYGTSMLYGMHWILDVDNWYGFGARADGTSKPSYINTFQRGEQESTWETIPQPCWDEHKFGGQYGFLDLFTKDTGTPAKQFKYTNAPDADARAVQATYWADQWAKEQGKSVSTSVGKATKMGDYLRYSFFDKYFRKIGQPSQAGTGYDAAHYLLSWYYAWGGGIDSTWSWIIGSSHNHFGYQNPFAAWVLSTDANFKPKSSNGASDWAKSLDRQLEFYQWLQSAEGAIAGGATNSWNGRYEAVPSGTSTFYGMGYVENPVYADPGSNTWFGMQVWSMQRVAELYYKTGDARAKKLLDKWAKWINGEIKFNADGTFQIPSTIDWEGQPDTWNPTQGYTGNANLHVKVVNYGTDLGCASSLANTLTYYAAKSGDETSRQNAQKLLDAMWNNYSDSKGISTVEQRGDYHRFLDQEVFVPAGWTGKMPNGDVIKSGVKFIDIRSKYKQDPEWQTMVAALQAGQVPTQRLHRFWAQSEFAVANGVYAILFPDQGPEKLLGDVNGDETVDAIDLAILKKYLLNSSTTINTANADMNSDNAIDAIDYALLKKALLSIQ.

The N-terminal stretch at 1–29 (MSKNFKRVGAVAVAAAMSLSIMATTSINA) is a signal peptide. Positions 142 to 165 (PEFQDPSKYPSPLDTSQPVGRDPI) are disordered. A compositionally biased stretch (polar residues) spans 154 to 165 (LDTSQPVGRDPI). Residues 661 to 722 (PEKLLGDVNG…LLKKALLSIQ (62 aa)) enclose the Dockerin domain.

Belongs to the glycosyl hydrolase 48 (cellulase L) family.

It carries out the reaction Endohydrolysis of (1-&gt;4)-beta-D-glucosidic linkages in cellulose, lichenin and cereal beta-D-glucans.. In terms of biological role, probable endoglucanase involved in the degradation of cellulose or related beta-glucans. The protein is Endoglucanase F (celCCF) of Ruminiclostridium cellulolyticum (strain ATCC 35319 / DSM 5812 / JCM 6584 / H10) (Clostridium cellulolyticum).